The chain runs to 403 residues: Serine/threonine transporter SstT (403 aa).

9 helical membrane passes run 16–36, 45–65, 79–99, 138–158, 175–195, 214–234, 295–315, 327–347, and 353–373; these read QIVI…AIAL, FVSA…MASI, ILWL…VASM, ALLN…GVAL, GVTL…FGLV, LAVL…LIVF, MAGA…TLGI, MVAA…LLLI, and LFGI…IIGV.

Belongs to the dicarboxylate/amino acid:cation symporter (DAACS) (TC 2.A.23) family.

The protein localises to the cell inner membrane. It carries out the reaction L-serine(in) + Na(+)(in) = L-serine(out) + Na(+)(out). It catalyses the reaction L-threonine(in) + Na(+)(in) = L-threonine(out) + Na(+)(out). Involved in the import of serine and threonine into the cell, with the concomitant import of sodium (symport system). This Pseudomonas putida (strain W619) protein is Serine/threonine transporter SstT.